The sequence spans 82 residues: Large ribosomal subunit protein bL31B (82 aa).

Belongs to the bacterial ribosomal protein bL31 family. Type B subfamily. Part of the 50S ribosomal subunit.

The chain is Large ribosomal subunit protein bL31B from Proteus mirabilis (strain HI4320).